The following is a 150-amino-acid chain: SsrA-binding protein (150 aa).

This sequence belongs to the SmpB family.

It is found in the cytoplasm. Functionally, required for rescue of stalled ribosomes mediated by trans-translation. Binds to transfer-messenger RNA (tmRNA), required for stable association of tmRNA with ribosomes. tmRNA and SmpB together mimic tRNA shape, replacing the anticodon stem-loop with SmpB. tmRNA is encoded by the ssrA gene; the 2 termini fold to resemble tRNA(Ala) and it encodes a 'tag peptide', a short internal open reading frame. During trans-translation Ala-aminoacylated tmRNA acts like a tRNA, entering the A-site of stalled ribosomes, displacing the stalled mRNA. The ribosome then switches to translate the ORF on the tmRNA; the nascent peptide is terminated with the 'tag peptide' encoded by the tmRNA and targeted for degradation. The ribosome is freed to recommence translation, which seems to be the essential function of trans-translation. In Campylobacter curvus (strain 525.92), this protein is SsrA-binding protein.